The primary structure comprises 599 residues: Elongation factor 4 (599 aa).

Residues 2-184 enclose the tr-type G domain; that stretch reads KNIRNFSIIA…EIVAKIPAPK (183 aa). GTP is bound by residues 14–19 and 131–134; these read DHGKST and NKID.

The protein belongs to the TRAFAC class translation factor GTPase superfamily. Classic translation factor GTPase family. LepA subfamily.

It localises to the cell inner membrane. The enzyme catalyses GTP + H2O = GDP + phosphate + H(+). Required for accurate and efficient protein synthesis under certain stress conditions. May act as a fidelity factor of the translation reaction, by catalyzing a one-codon backward translocation of tRNAs on improperly translocated ribosomes. Back-translocation proceeds from a post-translocation (POST) complex to a pre-translocation (PRE) complex, thus giving elongation factor G a second chance to translocate the tRNAs correctly. Binds to ribosomes in a GTP-dependent manner. The protein is Elongation factor 4 of Mannheimia succiniciproducens (strain KCTC 0769BP / MBEL55E).